Reading from the N-terminus, the 208-residue chain is Large ribosomal subunit protein bL25 (208 aa).

The protein belongs to the bacterial ribosomal protein bL25 family. CTC subfamily. In terms of assembly, part of the 50S ribosomal subunit; part of the 5S rRNA/L5/L18/L25 subcomplex. Contacts the 5S rRNA. Binds to the 5S rRNA independently of L5 and L18.

Functionally, this is one of the proteins that binds to the 5S RNA in the ribosome where it forms part of the central protuberance. In Bordetella pertussis (strain Tohama I / ATCC BAA-589 / NCTC 13251), this protein is Large ribosomal subunit protein bL25.